A 95-amino-acid chain; its full sequence is Aspartyl/glutamyl-tRNA(Asn/Gln) amidotransferase subunit C (95 aa).

Belongs to the GatC family. In terms of assembly, heterotrimer of A, B and C subunits.

The enzyme catalyses L-glutamyl-tRNA(Gln) + L-glutamine + ATP + H2O = L-glutaminyl-tRNA(Gln) + L-glutamate + ADP + phosphate + H(+). The catalysed reaction is L-aspartyl-tRNA(Asn) + L-glutamine + ATP + H2O = L-asparaginyl-tRNA(Asn) + L-glutamate + ADP + phosphate + 2 H(+). Its function is as follows. Allows the formation of correctly charged Asn-tRNA(Asn) or Gln-tRNA(Gln) through the transamidation of misacylated Asp-tRNA(Asn) or Glu-tRNA(Gln) in organisms which lack either or both of asparaginyl-tRNA or glutaminyl-tRNA synthetases. The reaction takes place in the presence of glutamine and ATP through an activated phospho-Asp-tRNA(Asn) or phospho-Glu-tRNA(Gln). This Magnetococcus marinus (strain ATCC BAA-1437 / JCM 17883 / MC-1) protein is Aspartyl/glutamyl-tRNA(Asn/Gln) amidotransferase subunit C.